Consider the following 231-residue polypeptide: L-ribulose-5-phosphate 4-epimerase SgbE (231 aa).

Residues 27-28 (GN), 44-45 (SG), and 74-75 (SS) each bind substrate. Residues aspartate 76, histidine 95, and histidine 97 each coordinate Zn(2+). The active-site Proton donor/acceptor is the aspartate 120. Residue histidine 171 participates in Zn(2+) binding. Tyrosine 229 serves as the catalytic Proton donor/acceptor.

It belongs to the aldolase class II family. AraD/FucA subfamily. Zn(2+) serves as cofactor.

The catalysed reaction is L-ribulose 5-phosphate = D-xylulose 5-phosphate. In terms of biological role, catalyzes the interconversion of L-ribulose 5-phosphate (LRu5P) and D-xylulose 5-phosphate (D-Xu5P) via a retroaldol/aldol mechanism (carbon-carbon bond cleavage analogous to a class II aldolase reaction). May be involved in the utilization of 2,3-diketo-L-gulonate. The sequence is that of L-ribulose-5-phosphate 4-epimerase SgbE from Haemophilus influenzae (strain ATCC 51907 / DSM 11121 / KW20 / Rd).